A 669-amino-acid polypeptide reads, in one-letter code: DNA ligase (669 aa).

Residues aspartate 32 to aspartate 36, serine 81 to leucine 82, and glutamate 113 contribute to the NAD(+) site. Residue lysine 115 is the N6-AMP-lysine intermediate of the active site. NAD(+) contacts are provided by arginine 136, glutamate 173, lysine 290, and lysine 314. Residues cysteine 408, cysteine 411, cysteine 426, and cysteine 432 each contribute to the Zn(2+) site. The BRCT domain maps to alanine 592–lysine 669.

This sequence belongs to the NAD-dependent DNA ligase family. LigA subfamily. Mg(2+) serves as cofactor. Mn(2+) is required as a cofactor.

The catalysed reaction is NAD(+) + (deoxyribonucleotide)n-3'-hydroxyl + 5'-phospho-(deoxyribonucleotide)m = (deoxyribonucleotide)n+m + AMP + beta-nicotinamide D-nucleotide.. Functionally, DNA ligase that catalyzes the formation of phosphodiester linkages between 5'-phosphoryl and 3'-hydroxyl groups in double-stranded DNA using NAD as a coenzyme and as the energy source for the reaction. It is essential for DNA replication and repair of damaged DNA. The sequence is that of DNA ligase from Vibrio cholerae serotype O1 (strain ATCC 39541 / Classical Ogawa 395 / O395).